The sequence spans 545 residues: CTP synthase (545 aa).

Positions Met-1–Met-267 are amidoligase domain. CTP is bound at residue Ser-13. Ser-13 provides a ligand contact to UTP. Residues Ser-14–Ile-19 and Asp-71 each bind ATP. Residues Asp-71 and Glu-141 each contribute to the Mg(2+) site. CTP contacts are provided by residues Asp-148–Glu-150, Lys-188–Gln-193, and Lys-224. UTP-binding positions include Lys-188–Gln-193 and Lys-224. The 243-residue stretch at Glu-292–Pro-534 folds into the Glutamine amidotransferase type-1 domain. Gly-354 provides a ligand contact to L-glutamine. Cys-381 serves as the catalytic Nucleophile; for glutamine hydrolysis. Residues Leu-382–Gln-385, Glu-405, and Arg-462 contribute to the L-glutamine site. Residues His-507 and Glu-509 contribute to the active site.

The protein belongs to the CTP synthase family. Homotetramer.

It catalyses the reaction UTP + L-glutamine + ATP + H2O = CTP + L-glutamate + ADP + phosphate + 2 H(+). It carries out the reaction L-glutamine + H2O = L-glutamate + NH4(+). The enzyme catalyses UTP + NH4(+) + ATP = CTP + ADP + phosphate + 2 H(+). It functions in the pathway pyrimidine metabolism; CTP biosynthesis via de novo pathway; CTP from UDP: step 2/2. Its activity is regulated as follows. Allosterically activated by GTP, when glutamine is the substrate; GTP has no effect on the reaction when ammonia is the substrate. The allosteric effector GTP functions by stabilizing the protein conformation that binds the tetrahedral intermediate(s) formed during glutamine hydrolysis. Inhibited by the product CTP, via allosteric rather than competitive inhibition. In terms of biological role, catalyzes the ATP-dependent amination of UTP to CTP with either L-glutamine or ammonia as the source of nitrogen. Regulates intracellular CTP levels through interactions with the four ribonucleotide triphosphates. The protein is CTP synthase of Trichormus variabilis (strain ATCC 29413 / PCC 7937) (Anabaena variabilis).